The following is a 485-amino-acid chain: MPLTQLHCPHLLLLLLVLSCLPEAPSAQVMDFLFEKWKLYSDQCHHNLSLLPPPTELVCNRTFDKYSCWPDTPPNTTANISCPWYLPWYHKVQHRLVFKRCGPDGQWVRGPRGQPWRNASQCQLDDEEIEVQKGVAKMYSSQQVMYTVGYSLSLGALLLALVILLGLRKLHCTRNYIHGNLFASFVLKAGSVLVIDWLLKTRYSQKIGDDLSVSVWLSDGAMAGCRVATVIMQYGIIANYCWLLVEGVYLYSLLSLATFSERSFFSLYLGIGWGAPLLFVIPWVVVKCLFENVQCWTSNDNMGFWWILRIPVFLALLINFFIFVHIIHLLVAKLRAHQMHYADYKFRLARSTLTLIPLLGVHEVVFAFVTDEHAQGTLRSTKLFFDLFLSSFQGLLVAVLYCFLNKEVQAELMRRWRQWQEGKALQEERLASSHGSHMAPAGPCHGDPCEKLQLMSAGSSSGTGCVPSMETSLASSLPRLADSPT.

Residues 1–26 form the signal peptide; it reads MPLTQLHCPHLLLLLLVLSCLPEAPS. At 27–137 the chain is on the extracellular side; sequence AQVMDFLFEK…EIEVQKGVAK (111 aa). Disulfide bonds link Cys44/Cys68, Cys59/Cys101, and Cys82/Cys122. 5 N-linked (GlcNAc...) asparagine glycosylation sites follow: Asn47, Asn60, Asn75, Asn79, and Asn118. Residues 138–162 form a helical membrane-spanning segment; it reads MYSSQQVMYTVGYSLSLGALLLALV. Topologically, residues 163 to 174 are cytoplasmic; the sequence is ILLGLRKLHCTR. A helical membrane pass occupies residues 175–199; the sequence is NYIHGNLFASFVLKAGSVLVIDWLL. Over 200–226 the chain is Extracellular; the sequence is KTRYSQKIGDDLSVSVWLSDGAMAGCR. A disulfide bond links Cys225 and Cys295. A helical transmembrane segment spans residues 227 to 250; it reads VATVIMQYGIIANYCWLLVEGVYL. Over 251–264 the chain is Cytoplasmic; that stretch reads YSLLSLATFSERSF. A helical transmembrane segment spans residues 265–286; sequence FSLYLGIGWGAPLLFVIPWVVV. At 287–304 the chain is on the extracellular side; that stretch reads KCLFENVQCWTSNDNMGF. Residues 305–327 form a helical membrane-spanning segment; sequence WWILRIPVFLALLINFFIFVHII. Topologically, residues 328-351 are cytoplasmic; it reads HLLVAKLRAHQMHYADYKFRLARS. An important for allosteric inhibitor binding region spans residues 351–354; that stretch reads STLT. A helical membrane pass occupies residues 352–370; that stretch reads TLTLIPLLGVHEVVFAFVT. Over 371 to 382 the chain is Extracellular; it reads DEHAQGTLRSTK. The chain crosses the membrane as a helical span at residues 383–403; that stretch reads LFFDLFLSSFQGLLVAVLYCF. At 404–485 the chain is on the cytoplasmic side; sequence LNKEVQAELM…SLPRLADSPT (82 aa). The span at 457 to 475 shows a compositional bias: polar residues; sequence AGSSSGTGCVPSMETSLAS. The interval 457–485 is disordered; the sequence is AGSSSGTGCVPSMETSLASSLPRLADSPT. A phosphoserine mark is found at Ser460 and Ser476.

This sequence belongs to the G-protein coupled receptor 2 family. Post-translationally, ligand-binding promotes phosphorylation of serine residues in the C-terminal cytoplasmic domain. Phosphorylation is important for receptor endocytosis after ligand-binding. In terms of tissue distribution, expressed predominantly in liver, kidney, adrenal, lung and stomach, while lower levels of expression are detected in brown and white adipose tissue, cerebellum, duodenum and heart.

It is found in the cell membrane. In terms of biological role, G-protein coupled receptor for glucagon that plays a central role in the regulation of blood glucose levels and glucose homeostasis. Regulates the rate of hepatic glucose production by promoting glycogen hydrolysis and gluconeogenesis. Plays an important role in mediating the responses to fasting. Ligand binding causes a conformation change that triggers signaling via guanine nucleotide-binding proteins (G proteins) and modulates the activity of down-stream effectors, such as adenylate cyclase. Promotes activation of adenylate cyclase. Besides, plays a role in signaling via a phosphatidylinositol-calcium second messenger system. This chain is Glucagon receptor (Gcgr), found in Mus musculus (Mouse).